A 118-amino-acid chain; its full sequence is Large ribosomal subunit protein uL22 (118 aa).

Belongs to the universal ribosomal protein uL22 family. In terms of assembly, part of the 50S ribosomal subunit.

In terms of biological role, this protein binds specifically to 23S rRNA; its binding is stimulated by other ribosomal proteins, e.g. L4, L17, and L20. It is important during the early stages of 50S assembly. It makes multiple contacts with different domains of the 23S rRNA in the assembled 50S subunit and ribosome. Its function is as follows. The globular domain of the protein is located near the polypeptide exit tunnel on the outside of the subunit, while an extended beta-hairpin is found that lines the wall of the exit tunnel in the center of the 70S ribosome. The polypeptide is Large ribosomal subunit protein uL22 (Thermomicrobium roseum (strain ATCC 27502 / DSM 5159 / P-2)).